Reading from the N-terminus, the 148-residue chain is Aspartate carbamoyltransferase regulatory chain (148 aa).

Cysteine 106, cysteine 111, cysteine 134, and cysteine 137 together coordinate Zn(2+).

Belongs to the PyrI family. Contains catalytic and regulatory chains. Zn(2+) serves as cofactor.

Involved in allosteric regulation of aspartate carbamoyltransferase. The protein is Aspartate carbamoyltransferase regulatory chain of Methanococcus maripaludis (strain C6 / ATCC BAA-1332).